The chain runs to 169 residues: Peptide deformylase (169 aa).

2 residues coordinate Fe cation: Cys-93 and His-135. The active site involves Glu-136. His-139 contacts Fe cation.

This sequence belongs to the polypeptide deformylase family. The cofactor is Fe(2+).

The catalysed reaction is N-terminal N-formyl-L-methionyl-[peptide] + H2O = N-terminal L-methionyl-[peptide] + formate. Its function is as follows. Removes the formyl group from the N-terminal Met of newly synthesized proteins. Requires at least a dipeptide for an efficient rate of reaction. N-terminal L-methionine is a prerequisite for activity but the enzyme has broad specificity at other positions. This is Peptide deformylase from Aquifex aeolicus (strain VF5).